The sequence spans 442 residues: ATP-dependent RNA helicase SUB2 (442 aa).

The Q motif signature appears at 59 to 87; sequence TGFRDFLLKPELLRAISDLGFEHPSEVQQ. The 176-residue stretch at 90-265 folds into the Helicase ATP-binding domain; the sequence is IPQAILGTDV…KKFMQSPLEI (176 aa). ATP is bound at residue 103–110; that stretch reads AKSGMGKT. The DECD box signature appears at 212 to 215; that stretch reads DECD. Positions 277–438 constitute a Helicase C-terminal domain; it reads GLQQFYLKLE…TLPETVDPAT (162 aa).

This sequence belongs to the DEAD box helicase family. DECD subfamily.

The protein resides in the nucleus. The enzyme catalyses ATP + H2O = ADP + phosphate + H(+). In terms of biological role, ATP-binding RNA helicase involved in transcription elongation and required for the export of mRNA out of the nucleus. SUB2 also plays a role in pre-mRNA splicing and spliceosome assembly. May be involved in rDNA and telomeric silencing, and maintenance of genome integrity. The protein is ATP-dependent RNA helicase SUB2 (SUB2) of Cryptococcus neoformans var. neoformans serotype D (strain JEC21 / ATCC MYA-565) (Filobasidiella neoformans).